Consider the following 288-residue polypeptide: Bis(5'-nucleosyl)-tetraphosphatase, symmetrical (288 aa).

The protein belongs to the Ap4A hydrolase family.

It carries out the reaction P(1),P(4)-bis(5'-adenosyl) tetraphosphate + H2O = 2 ADP + 2 H(+). In terms of biological role, hydrolyzes diadenosine 5',5'''-P1,P4-tetraphosphate to yield ADP. The protein is Bis(5'-nucleosyl)-tetraphosphatase, symmetrical of Pseudomonas putida (strain ATCC 700007 / DSM 6899 / JCM 31910 / BCRC 17059 / LMG 24140 / F1).